Reading from the N-terminus, the 165-residue chain is NADH-quinone oxidoreductase subunit I (165 aa).

4Fe-4S ferredoxin-type domains lie at 57–86 and 96–125; these read RRYD…IESE and SRYD…ETHI. Positions 66, 69, 72, 76, 105, 108, 111, and 115 each coordinate [4Fe-4S] cluster.

It belongs to the complex I 23 kDa subunit family. As to quaternary structure, NDH-1 is composed of 14 different subunits. Subunits NuoA, H, J, K, L, M, N constitute the membrane sector of the complex. [4Fe-4S] cluster serves as cofactor.

The protein resides in the cell inner membrane. The catalysed reaction is a quinone + NADH + 5 H(+)(in) = a quinol + NAD(+) + 4 H(+)(out). Functionally, NDH-1 shuttles electrons from NADH, via FMN and iron-sulfur (Fe-S) centers, to quinones in the respiratory chain. The immediate electron acceptor for the enzyme in this species is believed to be ubiquinone. Couples the redox reaction to proton translocation (for every two electrons transferred, four hydrogen ions are translocated across the cytoplasmic membrane), and thus conserves the redox energy in a proton gradient. In Polaromonas sp. (strain JS666 / ATCC BAA-500), this protein is NADH-quinone oxidoreductase subunit I.